The chain runs to 202 residues: ATP-dependent Clp protease proteolytic subunit (202 aa).

Serine 101 serves as the catalytic Nucleophile. Residue histidine 126 is part of the active site.

Belongs to the peptidase S14 family. In terms of assembly, component of the chloroplastic Clp protease core complex.

Its subcellular location is the plastid. The protein resides in the chloroplast stroma. The enzyme catalyses Hydrolysis of proteins to small peptides in the presence of ATP and magnesium. alpha-casein is the usual test substrate. In the absence of ATP, only oligopeptides shorter than five residues are hydrolyzed (such as succinyl-Leu-Tyr-|-NHMec, and Leu-Tyr-Leu-|-Tyr-Trp, in which cleavage of the -Tyr-|-Leu- and -Tyr-|-Trp bonds also occurs).. In terms of biological role, cleaves peptides in various proteins in a process that requires ATP hydrolysis. Has a chymotrypsin-like activity. Plays a major role in the degradation of misfolded proteins. This Calycanthus floridus var. glaucus (Eastern sweetshrub) protein is ATP-dependent Clp protease proteolytic subunit.